Reading from the N-terminus, the 200-residue chain is Small ribosomal subunit protein uS4 (200 aa).

The tract at residues 22 to 42 (TGKELEKRPYAPGPHGPNQRK) is disordered. Residues 92–152 (ARLDNLVYRM…EKSNNLVVVK (61 aa)) form the S4 RNA-binding domain.

This sequence belongs to the universal ribosomal protein uS4 family. As to quaternary structure, part of the 30S ribosomal subunit. Contacts protein S5. The interaction surface between S4 and S5 is involved in control of translational fidelity.

One of the primary rRNA binding proteins, it binds directly to 16S rRNA where it nucleates assembly of the body of the 30S subunit. In terms of biological role, with S5 and S12 plays an important role in translational accuracy. The protein is Small ribosomal subunit protein uS4 of Bacillus thuringiensis subsp. konkukian (strain 97-27).